A 193-amino-acid chain; its full sequence is Acyl carrier protein phosphodiesterase (193 aa).

It belongs to the AcpH family.

The enzyme catalyses holo-[ACP] + H2O = apo-[ACP] + (R)-4'-phosphopantetheine + H(+). In terms of biological role, converts holo-ACP to apo-ACP by hydrolytic cleavage of the phosphopantetheine prosthetic group from ACP. In Escherichia coli O7:K1 (strain IAI39 / ExPEC), this protein is Acyl carrier protein phosphodiesterase.